The primary structure comprises 617 residues: Protein AsmA (617 aa).

At 1–3 (MRR) the chain is on the cytoplasmic side. Residues 4 to 24 (FLTTLMILLVVLVAGLSALVL) form a helical membrane-spanning segment. Residues 25–617 (LVNPNDFRDY…KDVKKLLEKM (593 aa)) lie on the Periplasmic side of the membrane. Residues 302–319 (TANGENGAAQQGQSQSTL) show a composition bias toward polar residues. Positions 302–321 (TANGENGAAQQGQSQSTLPR) are disordered.

Belongs to the AsmA family.

Its subcellular location is the cell inner membrane. Could be involved in the assembly of outer membrane proteins. May indirectly influence the assembly of outer membrane proteins, potentially by altering outer membrane fluidity. Inhibits the assembly of mutant forms of outer membrane protein F (OmpF). The protein is Protein AsmA of Escherichia coli (strain K12).